The primary structure comprises 313 residues: Mitochondrial uncoupling protein 5 (313 aa).

Solcar repeat units lie at residues 4–108 (KGFA…IKGE), 117–208 (MPLM…VKET), and 217–307 (DGLG…VKKL). Transmembrane regions (helical) follow at residues 6–26 (FAEG…LDLI), 77–97 (MRAL…YSTT), 123–143 (IGAG…ADVA), 182–202 (RGSS…LASY), 223–243 (VSAS…VDVI), and 280–300 (YKGF…LFVT).

Belongs to the mitochondrial carrier (TC 2.A.29) family. In terms of tissue distribution, expressed in roots, leaves, stems and flowers.

It localises to the mitochondrion inner membrane. Its function is as follows. PUMPS are mitochondrial transporter proteins that create proton leaks across the inner mitochondrial membrane, thus uncoupling oxidative phosphorylation. This leads to a decrease in the efficiency of oxidative phosphorylation and an increase in heat production. May be involved in protecting plant cells against oxidative stress damage. Recombinant PUMP5, reconstituted into liposomes, transports a wide range of dicarboxylic acids including malate, oxaloacetate and succinate as well as phosphate, sulfate and thiosulfate. However, it is unknown if these transports are of any biological significance in vivo. The protein is Mitochondrial uncoupling protein 5 (PUMP5) of Arabidopsis thaliana (Mouse-ear cress).